Consider the following 264-residue polypeptide: tRNA pseudouridine synthase A (264 aa).

D51 (nucleophile) is an active-site residue. Residue Y109 coordinates substrate.

The protein belongs to the tRNA pseudouridine synthase TruA family. Homodimer.

The enzyme catalyses uridine(38/39/40) in tRNA = pseudouridine(38/39/40) in tRNA. Its function is as follows. Formation of pseudouridine at positions 38, 39 and 40 in the anticodon stem and loop of transfer RNAs. The protein is tRNA pseudouridine synthase A of Aromatoleum aromaticum (strain DSM 19018 / LMG 30748 / EbN1) (Azoarcus sp. (strain EbN1)).